Consider the following 171-residue polypeptide: NRR repressor homolog 2 (171 aa).

Over residues 1 to 12 (MEARLSTGEKTK) the composition is skewed to basic and acidic residues. 3 disordered regions span residues 1–45 (MEAR…QQQM), 65–94 (AALP…APWR), and 119–143 (TTKG…EEDK). Positions 26 to 43 (PEEETAAETTTSEEEEQQ) are enriched in acidic residues.

Belongs to the NPR1-interactor family. As to quaternary structure, interacts with NPR1/NH1. Interacts with NPR3/NH3.

It localises to the nucleus. Functionally, binds to and weakly represses NPR1/NH1-mediated transcriptional activation of LG2 in vitro. The sequence is that of NRR repressor homolog 2 from Oryza sativa subsp. japonica (Rice).